We begin with the raw amino-acid sequence, 512 residues long: Cytochrome P450 monooxygenase adrA (512 aa).

The chain crosses the membrane as a helical span at residues Phe-12–Ala-32. 3 N-linked (GlcNAc...) asparagine glycosylation sites follow: Asn-86, Asn-149, and Asn-210. Cys-453 provides a ligand contact to heme.

This sequence belongs to the cytochrome P450 family. Heme is required as a cofactor.

Its subcellular location is the membrane. It participates in secondary metabolite biosynthesis; terpenoid biosynthesis. Its function is as follows. Cytochrome P450 monooxygenase; part of the gene cluster that mediates the biosynthesis of andrastins, meroterpenoid compounds that exhibit inhibitory activity against ras farnesyltransferase, suggesting that they could be promising leads for antitumor agents. The first step of the pathway is the synthesis of 3,5-dimethylorsellinic acid (DMOA) by the polyketide synthase adrD via condensation of one acetyl-CoA starter unit with 3 malonyl-CoA units and 2 methylations. DMAO is then converted to farnesyl-DMAO by the prenyltransferase adrG. The methyltransferase adrK catalyzes the methylation of the carboxyl group of farnesyl-DMAO to farnesyl-DMAO methyl ester which is further converted to epoxyfarnesyl-DMAO methyl ester by the FAD-dependent monooxygenase adrH. The terpene cyclase adrI then catalyzes the carbon skeletal rearrangement to generate the andrastin E, the first compound in the pathway having the andrastin scaffold, with the tetracyclic ring system. The post-cyclization tailoring enzymes adrF, adrE, adrJ, and adrA, are involved in the conversion of andrastin E into andrastin A. The short chain dehydrogenase adrF is responsible for the oxidation of the C-3 a hydroxyl group of andrastin E to yield the corresponding ketone, andrastin D. The ketoreductase adrE stereoselectively reduces the carbonyl moiety to reverse the stereochemistry of the C-3 position to yield andrastin F. The acetyltransferase adrJ is the acetyltransferase that attaches the acetyl group to the C-3 hydroxyl group of andrastin F to yield andrastin C. Finally, the cytochrome P450 monooxygenase adrA catalyzes two sequential oxidation reactions of the C-23 methyl group, to generate the corresponding alcohol andrastin B, and aldehyde andrastin A. This is Cytochrome P450 monooxygenase adrA from Penicillium rubens (strain ATCC 28089 / DSM 1075 / NRRL 1951 / Wisconsin 54-1255) (Penicillium chrysogenum).